Reading from the N-terminus, the 268-residue chain is Small ribosomal subunit protein uS3 (268 aa).

A KH type-2 domain is found at 38–106 (IRKLLATGME…QVQLNILEVK (69 aa)). The interval 217–268 (NTAAPAGDRPRRERPSRPRRSGATGTTATSTEAGRAATATADAPATEQNQEG) is disordered. The span at 237 to 268 (SGATGTTATSTEAGRAATATADAPATEQNQEG) shows a compositional bias: low complexity.

This sequence belongs to the universal ribosomal protein uS3 family. In terms of assembly, part of the 30S ribosomal subunit. Forms a tight complex with proteins S10 and S14.

In terms of biological role, binds the lower part of the 30S subunit head. Binds mRNA in the 70S ribosome, positioning it for translation. This is Small ribosomal subunit protein uS3 from Rhodococcus erythropolis (strain PR4 / NBRC 100887).